The sequence spans 92 residues: UPF0223 protein SSA_0938 (92 aa).

It belongs to the UPF0223 family.

The polypeptide is UPF0223 protein SSA_0938 (Streptococcus sanguinis (strain SK36)).